The primary structure comprises 192 residues: MQSHPEVAVLRYGHRPGRDDRMTTHVGLTARALGADRVLFPDNATQAAETVRDITGRFGGPFDVERTTELNATIEDWPGVVVHLTMYGEQLQSVDDEIRTTHREEPVLVVVGGEKVPGDVYEAADWNVGVTNQPHSEVAGLAVFLDRLFDGRELEQGYENAERRVIPEELGKHVVDVEDGDHAEGAAAGDGD.

Residues leucine 84 and 112 to 116 (GGEKV) contribute to the S-adenosyl-L-methionine site.

This sequence belongs to the aTrm56 family. As to quaternary structure, homodimer.

The protein localises to the cytoplasm. The enzyme catalyses cytidine(56) in tRNA + S-adenosyl-L-methionine = 2'-O-methylcytidine(56) in tRNA + S-adenosyl-L-homocysteine + H(+). Functionally, specifically catalyzes the AdoMet-dependent 2'-O-ribose methylation of cytidine at position 56 in tRNAs. In Halobacterium salinarum (strain ATCC 700922 / JCM 11081 / NRC-1) (Halobacterium halobium), this protein is tRNA (cytidine(56)-2'-O)-methyltransferase.